The chain runs to 227 residues: Endo-1,4-beta-xylanase 11A (227 aa).

The first 36 residues, 1 to 36 (MVSASSLLLAASAIAGVFSAPAAAPVSENLNVLQER), serve as a signal peptide directing secretion. One can recognise a GH11 domain in the interval 37 to 227 (ALTSSATGTS…SSGSASITVS (191 aa)). The interval 112-136 (VYGWTTSPLIEYYIVEDFGTYDPSS) is necrosis inducing domain. Glutamate 122 (nucleophile) is an active-site residue. Glutamate 214 (proton donor) is an active-site residue.

It belongs to the glycosyl hydrolase 11 (cellulase G) family.

It is found in the secreted. The enzyme catalyses Endohydrolysis of (1-&gt;4)-beta-D-xylosidic linkages in xylans.. It participates in glycan degradation; xylan degradation. Its activity is regulated as follows. Significantly inhibited by the wheat xylanase inhibiting protein I (XIP-I) and the proteinaceous endoxylanase Triticum aestivum xylanase inhibitors I (TAXI-I), whereas no inhibition is detected with TAXI-II. Functionally, endo-1,4-beta-xylanase involved in the hydrolysis of xylan, a major structural heterogeneous polysaccharide found in plant biomass representing the second most abundant polysaccharide in the biosphere, after cellulose. Required for plant infection and the appearance of secondary lesions. Is able to induce necrosis on leaves, seedling growth inhibition, induction of a ROS burst, electrolyte leakage, cytoplasm shrinkage, autofluorescence, cell death, and induction of defense genes, and this abilities are independent of the catalytic activity. Only exhibits elicitor activity in certain plants such as tomato, but not in N.benthamiana. The sequence is that of Endo-1,4-beta-xylanase 11A from Botryotinia fuckeliana (strain B05.10) (Noble rot fungus).